The primary structure comprises 273 residues: MTSLVSAQRLGIVAVDEAIPLELRSRSTEEEVDAVILAVYRQVLGNDHLMSQERLTSAESLLRGREISVRDFVRAVALSEVYRQKFFHSNPQNRFIELNYKHLLGRAPYDQSEIAFHTDLYHQGGYEAEINSYIDSVEYTENFGDWVVPYFRGFATQRNQKTVGFSRSFQVYRGYATSDRSQGNGSRSRLTRELARNTASPVYAGSTAESLRGTSAGSRNQMYRLQVIQGAAPGRGTRVRRGKAEYLVSYDNLSAKLQQINRQGDTVTMISLA.

A PBS-linker domain is found at Met-1–Arg-180. The region spanning Asn-220–Ala-273 is the CpcD-like domain.

Belongs to the phycobilisome linker protein family. In terms of assembly, part of 2 PBS rod complexes, the conventional CpcG-PBS rod and a photosystem I-specific CpcL-PBS rod, both of which include ferredoxin--NADP reductase (petH). CpcG-PBS has on average 3 stacked phycocyanin hexamers (PC, CpcA and CpcB). Linker CpcG connects the PC stack to the thylakoid, the hexamers are linked by 1 copy of CpcC1, 1 copy of CpcC2 and the stack is terminated by a single copy of CpcD. The CpcL-PBS has on average 5 stacked phycocyanin hexamers (PC, CpcA and CpcB). Linker CpcL connects the PC stack to the thylakoid, the hexamers are linked by 1 copy of CpcC1, 3 copies of CpcC2 and the stack is terminated by a single copy of CpcD. Interacts with the C-phycocyanin (PC) beta subunit (cpcB), it may fit into the center of the PC hexamer.

It is found in the cellular thylakoid membrane. In terms of biological role, rod linker protein, associated with phycocyanin. Linker polypeptides determine the state of aggregation and the location of the disk-shaped phycobiliprotein units within the phycobilisome and modulate their spectroscopic properties in order to mediate a directed and optimal energy transfer. This chain is Phycobilisome 32.1 kDa linker polypeptide, phycocyanin-associated, rod 2 (cpcC2), found in Synechocystis sp. (strain ATCC 27184 / PCC 6803 / Kazusa).